Here is a 767-residue protein sequence, read N- to C-terminus: Ribonucleoside-diphosphate reductase large subunit (767 aa).

Residues Thr-176, 191–192 (SC), Gly-222, 392–396 (NLCAE), and 578–582 (PTAGT) contribute to the substrate site. The cysteines at positions 192 and 408 are disulfide-linked. Asn-392 (proton acceptor) is an active-site residue. Residue Cys-394 is the Cysteine radical intermediate of the active site. Glu-396 (proton acceptor) is an active-site residue.

This sequence belongs to the ribonucleoside diphosphate reductase large chain family. Heterotetramer composed of a homodimer of the large subunit (R1) and a homodimer of the small subunit (R2). Larger multisubunit protein complex are also active, composed of (R1)n(R2)n.

It catalyses the reaction a 2'-deoxyribonucleoside 5'-diphosphate + [thioredoxin]-disulfide + H2O = a ribonucleoside 5'-diphosphate + [thioredoxin]-dithiol. Functionally, ribonucleoside-diphosphate reductase holoenzyme provides the precursors necessary for viral DNA synthesis. Allows virus growth in non-dividing cells, as well as reactivation from latency in infected hosts. Catalyzes the biosynthesis of deoxyribonucleotides from the corresponding ribonucleotides. The chain is Ribonucleoside-diphosphate reductase large subunit from Saimiri sciureus (Common squirrel monkey).